An 861-amino-acid chain; its full sequence is Homeobox-leucine zipper protein HOX29 (861 aa).

Residues 2-65 constitute a DNA-binding region (homeobox); sequence DASKYVRYTP…NRRCREKQRK (64 aa). A coiled-coil region spans residues 57–99; the sequence is RRCREKQRKESSRLQALNRKLTAMNKLLMEENDRLQKQVSQLV. In terms of domain architecture, START spans 162–390; sequence RDASPAGLMS…VAHEDTRSVI (229 aa).

It belongs to the HD-ZIP homeobox family. Class III subfamily. As to expression, expressed in roots, stems and leaf blades.

Its subcellular location is the nucleus. Its function is as follows. Probable transcription factor. In Oryza sativa subsp. indica (Rice), this protein is Homeobox-leucine zipper protein HOX29 (HOX29).